The following is a 186-amino-acid chain: Hydra actinoporin-like toxin 6 (186 aa).

Positions 1–21 (MLVYVCLVVILIQLPFGAAGG) are cleaved as a signal peptide. The short motif at 158-160 (RAG) is the Cell attachment site element.

The protein belongs to the actinoporin family. HALT subfamily. As to quaternary structure, octamer or nonamer in membranes. Monomer in the soluble state. In vitro, interacts with folate receptor alpha (of target organism). In terms of tissue distribution, expressed female germline during oogenesis.

The protein localises to the nematocyst. The protein resides in the secreted. Its subcellular location is the target cell membrane. In terms of biological role, pore-forming protein that forms hydrophilic pores and causes cytolysis. Compared to equinatoxin-2 (AC P61914), it reveals lower cytolysis activity (5-12-fold difference, tested on erythrocytes), a larger pore size (probably 2-3 nm) and different affinity to membrane lipids (100-fold lower affinity to sphingomyelin). Binds to sulfatides. Shows cytolytic activity on HeLa cells, with a different potency than its paralogs (from most potent to less potent: HALT-4&gt;HALT-6~HALT-1&gt;HALT-3&gt;HALT-7&gt;HALT-2). Pore formation is a multi-step process that involves specific recognition of membrane lipid by a protein aromatic residues rich region, firm binding to the membrane (mainly driven by hydrophobic interactions) accompanied by the transfer of the N-terminal region to the lipid-water interface and finally pore formation after oligomerization of monomers. In vitro, binds to the folate receptor alpha (FOLR1), a GPI-anchored membrane protein that plays a major role in the uptake of folate/folic acid into cells via endocytosis, suggesting a possible involvement of this receptor in the mechanism of HALT-1-induced cell lysis. In vivo, does not cause visible paralysis in larvae of the blowfly Sarcophaga faculata, the most common arthropod prey of Hydra. The polypeptide is Hydra actinoporin-like toxin 6 (Hydra vulgaris (Hydra)).